A 218-amino-acid chain; its full sequence is Cytochrome b6 (218 aa).

A helical transmembrane segment spans residues 35–55; that stretch reads IFYCLGGITLVCFLIQFATGF. Cysteine 38 contacts heme c. Histidine 89 and histidine 103 together coordinate heme b. The next 3 membrane-spanning stretches (helical) occupy residues 93 to 113, 119 to 139, and 189 to 209; these read ASMM…TGGF, LTWV…VTGY, and LHTF…FLMI. Residues histidine 190 and histidine 205 each contribute to the heme b site.

It belongs to the cytochrome b family. PetB subfamily. As to quaternary structure, the 4 large subunits of the cytochrome b6-f complex are cytochrome b6, subunit IV (17 kDa polypeptide, PetD), cytochrome f and the Rieske protein, while the 4 small subunits are PetG, PetL, PetM and PetN. The complex functions as a dimer. The cofactor is heme b. Heme c is required as a cofactor.

The protein resides in the cellular thylakoid membrane. Component of the cytochrome b6-f complex, which mediates electron transfer between photosystem II (PSII) and photosystem I (PSI), cyclic electron flow around PSI, and state transitions. This chain is Cytochrome b6, found in Parasynechococcus marenigrum (strain WH8102).